We begin with the raw amino-acid sequence, 410 residues long: Na(+)/H(+) antiporter NhaS4 (410 aa).

The next 11 helical transmembrane spans lie at Leu7–Phe27, Pro33–Leu53, Phe69–Leu89, Val107–Leu127, Phe135–Ala155, Leu173–Val193, Ile199–Leu219, Leu241–Ile261, Phe291–Gly311, Trp319–Val339, and Gly376–Ile396.

This sequence belongs to the monovalent cation:proton antiporter 2 (CPA2) transporter (TC 2.A.37) family.

The protein resides in the membrane. Na(+)/H(+) antiporter. In Synechocystis sp. (strain ATCC 27184 / PCC 6803 / Kazusa), this protein is Na(+)/H(+) antiporter NhaS4 (nhaS4).